The sequence spans 254 residues: NAD kinase (254 aa).

Asp44 functions as the Proton acceptor in the catalytic mechanism. Residues 44–45 (DG), 114–115 (NE), Asp144, Ala152, 155–160 (TAYNYS), and Ala179 contribute to the NAD(+) site.

The protein belongs to the NAD kinase family. It depends on a divalent metal cation as a cofactor.

Its subcellular location is the cytoplasm. The catalysed reaction is NAD(+) + ATP = ADP + NADP(+) + H(+). Involved in the regulation of the intracellular balance of NAD and NADP, and is a key enzyme in the biosynthesis of NADP. Catalyzes specifically the phosphorylation on 2'-hydroxyl of the adenosine moiety of NAD to yield NADP. In Cereibacter sphaeroides (strain ATCC 17023 / DSM 158 / JCM 6121 / CCUG 31486 / LMG 2827 / NBRC 12203 / NCIMB 8253 / ATH 2.4.1.) (Rhodobacter sphaeroides), this protein is NAD kinase.